The chain runs to 187 residues: Elongation factor P (187 aa).

The protein belongs to the elongation factor P family.

The protein localises to the cytoplasm. Its pathway is protein biosynthesis; polypeptide chain elongation. Involved in peptide bond synthesis. Stimulates efficient translation and peptide-bond synthesis on native or reconstituted 70S ribosomes in vitro. Probably functions indirectly by altering the affinity of the ribosome for aminoacyl-tRNA, thus increasing their reactivity as acceptors for peptidyl transferase. The polypeptide is Elongation factor P (Wolinella succinogenes (strain ATCC 29543 / DSM 1740 / CCUG 13145 / JCM 31913 / LMG 7466 / NCTC 11488 / FDC 602W) (Vibrio succinogenes)).